The following is a 299-amino-acid chain: GTP cyclohydrolase FolE2 (299 aa).

The disordered stretch occupies residues 1–25 (MKTKQWPSKTERHKRFGSVPPVAGK).

Belongs to the GTP cyclohydrolase IV family.

The catalysed reaction is GTP + H2O = 7,8-dihydroneopterin 3'-triphosphate + formate + H(+). It functions in the pathway cofactor biosynthesis; 7,8-dihydroneopterin triphosphate biosynthesis; 7,8-dihydroneopterin triphosphate from GTP: step 1/1. Converts GTP to 7,8-dihydroneopterin triphosphate. The sequence is that of GTP cyclohydrolase FolE2 from Halalkalibacterium halodurans (strain ATCC BAA-125 / DSM 18197 / FERM 7344 / JCM 9153 / C-125) (Bacillus halodurans).